We begin with the raw amino-acid sequence, 234 residues long: Thymidylate kinase (234 aa).

Position 10-17 (10-17 (GGEGSGKT)) interacts with ATP.

The protein belongs to the thymidylate kinase family.

It carries out the reaction dTMP + ATP = dTDP + ADP. Its function is as follows. Phosphorylation of dTMP to form dTDP in both de novo and salvage pathways of dTTP synthesis. The polypeptide is Thymidylate kinase (Cyanothece sp. (strain PCC 7425 / ATCC 29141)).